Reading from the N-terminus, the 192-residue chain is Thymidylate kinase (192 aa).

Residue 7–14 (GVDGVGKS) participates in ATP binding.

Belongs to the thymidylate kinase family.

It catalyses the reaction dTMP + ATP = dTDP + ADP. Functionally, phosphorylation of dTMP to form dTDP in both de novo and salvage pathways of dTTP synthesis. This Campylobacter fetus subsp. fetus (strain 82-40) protein is Thymidylate kinase.